The chain runs to 419 residues: Chaperone protein dnaJ 2 (419 aa).

The region spanning 14 to 75 (KFYEILGVPK…EKREIYDQYG (62 aa)) is the J domain. The segment at 136–220 (GTTKKLSLSR…CKGEKVVSEK (85 aa)) adopts a CR-type zinc-finger fold. Zn(2+) contacts are provided by Cys-149, Cys-152, Cys-165, Cys-168, Cys-192, Cys-195, Cys-208, and Cys-211. CXXCXGXG motif repeat units lie at residues 149–156 (CSKCNGKG), 165–172 (CGGCQGSG), 192–199 (CNDCKGTG), and 208–215 (CPQCKGEK). The segment covering 378–391 (TTLHDVNIEDEMKR) has biased composition (basic and acidic residues). The disordered stretch occupies residues 378 to 419 (TTLHDVNIEDEMKRKAQAQREAYDDDEEDHPGGAQRVQCAQQ). Cys-416 is subject to Cysteine methyl ester. A lipid anchor (S-farnesyl cysteine) is attached at Cys-416. The propeptide at 417–419 (AQQ) is removed in mature form.

The protein belongs to the DnaJ family. A/I subfamily. In terms of assembly, homodimer. Requires Zn(2+) as cofactor. Post-translationally, farnesylated. Expressed in both etiolated and light-grown tissues.

Its subcellular location is the membrane. Plays a continuous role in plant development probably in the structural organization of compartments. In Arabidopsis thaliana (Mouse-ear cress), this protein is Chaperone protein dnaJ 2 (ATJ2).